The chain runs to 132 residues: DNA-directed RNA polymerase subunit omega (132 aa).

A disordered region spans residues 90-109 (SSEAGGVLGTSSEEEGSSFD).

The protein belongs to the RNA polymerase subunit omega family. As to quaternary structure, the RNAP catalytic core consists of 2 alpha, 1 beta, 1 beta' and 1 omega subunit. When a sigma factor is associated with the core the holoenzyme is formed, which can initiate transcription.

The catalysed reaction is RNA(n) + a ribonucleoside 5'-triphosphate = RNA(n+1) + diphosphate. Its function is as follows. Promotes RNA polymerase assembly. Latches the N- and C-terminal regions of the beta' subunit thereby facilitating its interaction with the beta and alpha subunits. This Bartonella henselae (strain ATCC 49882 / DSM 28221 / CCUG 30454 / Houston 1) (Rochalimaea henselae) protein is DNA-directed RNA polymerase subunit omega.